The following is a 146-amino-acid chain: Hemoglobin subunit beta-1 (146 aa).

Residues 2-146 (EWTDAEKSTI…VVAAMGSRYF (145 aa)) form the Globin domain. Heme b-binding residues include H63 and H92.

This sequence belongs to the globin family. As to quaternary structure, heterotetramer of two alpha chains and two beta chains. Red blood cells.

Functionally, involved in oxygen transport from gills to the various peripheral tissues. This chain is Hemoglobin subunit beta-1 (hbb1), found in Oncorhynchus mykiss (Rainbow trout).